Here is a 399-residue protein sequence, read N- to C-terminus: Serine palmitoyltransferase (399 aa).

Pyridoxal 5'-phosphate contacts are provided by residues 113–114, His-213, Thr-241, and Ser-243; that span reads GF. The residue at position 244 (Lys-244) is an N6-(pyridoxal phosphate)lysine.

It belongs to the class-II pyridoxal-phosphate-dependent aminotransferase family. In terms of assembly, homodimer. Pyridoxal 5'-phosphate is required as a cofactor.

The protein localises to the cytoplasm. It carries out the reaction L-serine + hexadecanoyl-CoA + H(+) = 3-oxosphinganine + CO2 + CoA. It functions in the pathway lipid metabolism; sphingolipid metabolism. Catalyzes the condensation of L-serine with palmitoyl-CoA (hexadecanoyl-CoA) to produce 3-oxosphinganine. The protein is Serine palmitoyltransferase of Sphingobacterium spiritivorum (Flavobacterium spiritivorum).